An 857-amino-acid polypeptide reads, in one-letter code: MMAAAGNASKPSLNNFYAEGLGHLREGLFSCFRPVLGYFGGKPTQEIEKTEDEGWEIPFDAISNLEWLGSGSQGAVFHGQYENRTVAVKKVNQLKETEIKHLRHLRHKNIIEFLGVCSKSPCYCIVMEYCPKGQLCTVLRQKNLITRQMFSDWVKEIADGMHYLHQNKVIHRDLKSPNILISAEDSIKICDFGTSHLQKKNDSTMMSFCGTVSWMAPEMIKKEPCNEKVDVYSFGVVLWEMLTRETPYANIAQMAIIFGVGTNILNLPMPEEAPRGLVLLIKQCLSQKGRNRPSFSHIRQHWEIFKPELFEMTEDEWQVAWDSYREFAKAIQYPSTVTKDHGGPKSAFAMEEEMQRKRHEQLNHIKDIRHMYEAKLKRTNKMYDKLQGCFTELKLKEHELAEWERNLAEREQMHVYNSPRSMSAAPRFQLRGNCYPNEAYEEMSSDEDGQCPPCRGSPYRNSNMSTSSGAQSSPFSRQSSCRSSAGQQTRRSEGANAQKISRNDLLRHSSSYWETIGNRGSPARGSGFSQDSGVWSAGVSSMAINGGVQGGVPVTYAQTIYRNGEGRWSDGRIASRRRVSSSANKNLPPVFFTRDSPSRVPHGVVNHSAPRSSSKLNRSSYPSRNAPHQLEDGCCCNHGRVPRAKSVAVSMATRGRSPTPYDNDASDAAENPDIHYELQIPETTSYDEALKSIGETDDVEMDAANGVNPIYSSPITTYNNPCHVNYENVTEENANDIDLTSSMDSRRSRADDADVESSEDEGNGNNILNTSMESEELRYRIDTSQSTMMSSLERSLEIGATRSDGLSDNERRVQAVKHSIKTHRRTSSNPQAIIHQRIEEYSSSATEDSDDAGAVRI.

The region spanning 62–304 is the Protein kinase domain; the sequence is ISNLEWLGSG…FSHIRQHWEI (243 aa). ATP contacts are provided by residues 68-76 and Lys89; that span reads LGSGSQGAV. Residue Asp173 is the Proton acceptor of the active site. Disordered stretches follow at residues 441-503, 572-625, 733-775, and 818-857; these read EEMS…ISRN, RIAS…PSRN, NAND…MESE, and HSIK…AVRI. Residues 467-488 are compositionally biased toward low complexity; that stretch reads SSGAQSSPFSRQSSCRSSAGQQ. Residues 609–623 show a composition bias toward polar residues; that stretch reads APRSSSKLNRSSYPS. A compositionally biased stretch (acidic residues) spans 753 to 762; sequence ADVESSEDEG. Positions 763–772 are enriched in polar residues; it reads NGNNILNTSM.

The protein belongs to the protein kinase superfamily. STE Ser/Thr protein kinase family. MAP kinase kinase kinase subfamily. Mg(2+) serves as cofactor. In terms of processing, ubiquitinated by rpm-1. Negatively regulated by ubiquitination by fsn-1 bound rpm-1, followed by degradation.

Its subcellular location is the synapse. The catalysed reaction is L-seryl-[protein] + ATP = O-phospho-L-seryl-[protein] + ADP + H(+). The enzyme catalyses L-threonyl-[protein] + ATP = O-phospho-L-threonyl-[protein] + ADP + H(+). Functionally, component of a MAP kinase pathway that functions presynaptically to regulate synaptic architecture and presynaptic differentiation. Phosphorylates and activates mkk-4. In Caenorhabditis briggsae, this protein is Mitogen-activated protein kinase kinase kinase dlk-1.